The chain runs to 529 residues: Methionine--tRNA ligase (529 aa).

A 'HIGH' region motif is present at residues 12–22 (YYVNALPHIGS). Zn(2+) contacts are provided by C127, C130, C145, and H148. Positions 301 to 305 (KMGKS) match the 'KMSKS' region motif. K304 serves as a coordination point for ATP.

This sequence belongs to the class-I aminoacyl-tRNA synthetase family. MetG type 2A subfamily. As to quaternary structure, monomer. Zn(2+) serves as cofactor.

Its subcellular location is the cytoplasm. It catalyses the reaction tRNA(Met) + L-methionine + ATP = L-methionyl-tRNA(Met) + AMP + diphosphate. Functionally, is required not only for elongation of protein synthesis but also for the initiation of all mRNA translation through initiator tRNA(fMet) aminoacylation. The protein is Methionine--tRNA ligase of Thermosynechococcus vestitus (strain NIES-2133 / IAM M-273 / BP-1).